Reading from the N-terminus, the 208-residue chain is Segregation and condensation protein B (208 aa).

The protein belongs to the ScpB family. In terms of assembly, homodimer. Homodimerization may be required to stabilize the binding of ScpA to the Smc head domains. Component of a cohesin-like complex composed of ScpA, ScpB and the Smc homodimer, in which ScpA and ScpB bind to the head domain of Smc. The presence of the three proteins is required for the association of the complex with DNA.

The protein localises to the cytoplasm. Participates in chromosomal partition during cell division. May act via the formation of a condensin-like complex containing Smc and ScpA that pull DNA away from mid-cell into both cell halves. In Mycoplasma pneumoniae (strain ATCC 29342 / M129 / Subtype 1) (Mycoplasmoides pneumoniae), this protein is Segregation and condensation protein B.